The sequence spans 617 residues: Probable Xaa-Pro aminopeptidase P (617 aa).

Mn(2+)-binding residues include Asp414, Asp425, Glu523, and Glu537.

Belongs to the peptidase M24B family. It depends on Mn(2+) as a cofactor.

The catalysed reaction is Release of any N-terminal amino acid, including proline, that is linked to proline, even from a dipeptide or tripeptide.. Functionally, catalyzes the removal of a penultimate prolyl residue from the N-termini of peptides. This chain is Probable Xaa-Pro aminopeptidase P (AMPP), found in Colletotrichum graminicola (strain M1.001 / M2 / FGSC 10212) (Maize anthracnose fungus).